Here is a 282-residue protein sequence, read N- to C-terminus: Acyl-CoA-binding domain-containing protein 6 (282 aa).

Residues 1-12 (MASSFLPSGATT) are compositionally biased toward polar residues. Residues 1 to 34 (MASSFLPSGATTGDSGGELSSGDDSGDVESLQSP) are disordered. The segment covering 17–31 (GELSSGDDSGDVESL) has biased composition (low complexity). At Ser41 the chain carries Phosphoserine. Residues 42–127 (LPELFEKAAE…VKKLDPSWNP (86 aa)) enclose the ACB domain. An acyl-CoA contacts are provided by residues 69 to 73 (YARYK) and Lys95. Ser106 carries the post-translational modification Phosphoserine. Tyr114 contributes to the an acyl-CoA binding site. ANK repeat units lie at residues 191–220 (EGRTLLHWACDRGHKELVTVLLQYRADINC) and 224–253 (EGQTALHYAAACEFLDIVELLLQSGADPTL).

As to quaternary structure, monomer.

It localises to the cytoplasm. Binds long-chain acyl-coenzyme A molecules with a strong preference for unsaturated C18:1-CoA, lower affinity for unsaturated C20:4-CoA, and very weak affinity for saturated C16:0-CoA. Does not bind fatty acids. This Bos taurus (Bovine) protein is Acyl-CoA-binding domain-containing protein 6 (ACBD6).